A 26-amino-acid polypeptide reads, in one-letter code: M-poneritoxin-Ng1d (26 aa).

As to expression, expressed by the venom gland.

The protein localises to the secreted. The protein resides in the target cell membrane. Its function is as follows. Has a broad spectrum of activity against both Gram-positive and Gram-negative bacteria and S.cerevisiae. Has insecticidal and hemolytic activities. May act by disrupting the integrity of the bacterial cell membrane. This chain is M-poneritoxin-Ng1d, found in Neoponera goeldii (Ponerine ant).